A 383-amino-acid polypeptide reads, in one-letter code: MVWCCRPLLRKYGNFIDNLRIYVKGGAGGMGLPRLGGQGGKGGDVKLVAKKEVTLKKIKDKFPHKRFIGGVGGNSSVRALKGQPGEVCQVEVPSGIVITTEHGVKIGELDKEGDEIRVARGGQGGVFQTDFLPSKGQKRIIHLDLKLISDVGLVGFPNAGKSSLLSRISHAKPQVAEYAFTTVKPELGRIMYPDYKQISVADLPGLIEGAHYNRGMGHKFLKHIERTRQLLFVVDVAGFQLSASTLYRSAFETVLLLTLELQLYKQELLDKPALLAVNKMDLPNANEKFEELLKQLENPAGNFHLLPDELVPERPIEFKHIIPVSAATGQGLENLIGCIRKTMDEQADMEIRELAQERLQSLQKETSRTVKRNLKNSPQRTHH.

The Obg domain maps to 13 to 148 (GNFIDNLRIY…RIIHLDLKLI (136 aa)). One can recognise an OBG-type G domain in the interval 149-344 (SDVGLVGFPN…LIGCIRKTMD (196 aa)). GTP is bound by residues 155 to 162 (GFPNAGKS), 202 to 206 (DLPGL), and 278 to 281 (NKMD). The interval 362–383 (LQKETSRTVKRNLKNSPQRTHH) is disordered. Residues 369 to 383 (TVKRNLKNSPQRTHH) show a composition bias toward basic residues.

It belongs to the TRAFAC class OBG-HflX-like GTPase superfamily. OBG GTPase family.

It is found in the nucleus. It localises to the nucleolus. May be involved in the ribosome maturation process. This chain is GTP-binding protein 10 (gtpbp10), found in Xenopus tropicalis (Western clawed frog).